Here is a 402-residue protein sequence, read N- to C-terminus: D-galactonate dehydratase family member RspA (402 aa).

Asn-37 and His-122 together coordinate substrate. The active-site Proton donor/acceptor is the Tyr-159. Residue Asp-210 coordinates Mg(2+). The Proton donor/acceptor role is filled by His-212. The Mg(2+) site is built by Glu-236 and Glu-262. Glu-262, Arg-283, His-312, Asp-316, and Glu-339 together coordinate substrate.

Belongs to the mandelate racemase/muconate lactonizing enzyme family. GalD subfamily. Mg(2+) serves as cofactor.

It carries out the reaction D-mannonate = 2-dehydro-3-deoxy-D-gluconate + H2O. In terms of biological role, has low D-mannonate dehydratase activity (in vitro), suggesting that this is not a physiological substrate and that it has no significant role in D-mannonate degradation in vivo. Has no detectable activity with a panel of 70 other acid sugars (in vitro). The sequence is that of D-galactonate dehydratase family member RspA (rspA) from Cellvibrio japonicus (strain Ueda107) (Pseudomonas fluorescens subsp. cellulosa).